The chain runs to 131 residues: Metalloproteinase inhibitor (131 aa).

The N-terminal stretch at 1–29 (MVRKRALGLAGSALTLVLGAVGFTAPAQA) is a signal peptide. Cystine bridges form between cysteine 33–cysteine 39 and cysteine 93–cysteine 98.

Its function is as follows. Inhibits microbial metallo-proteinases, such as thermolysin, but not serine, thiol, or carboxyl proteinases. This chain is Metalloproteinase inhibitor (smpI), found in Streptomyces nigrescens.